The sequence spans 95 residues: Costars family protein At4g33640 (95 aa).

An N-acetylmethionine modification is found at methionine 1.

The protein belongs to the costars family.

The polypeptide is Costars family protein At4g33640 (Arabidopsis thaliana (Mouse-ear cress)).